A 436-amino-acid polypeptide reads, in one-letter code: Fibrinogen gamma chain (436 aa).

Residues 1-25 (MSWSLQPPSFLLCCLLLLFSPTGLA) form the signal peptide. N-linked (GlcNAc...) asparagine glycosylation occurs at Asn-77. One can recognise a Fibrinogen C-terminal domain in the interval 169–415 (QIHDTTGKDC…ETTMKIIPFN (247 aa)). An intrachain disulfide couples Cys-178 to Cys-207. Ca(2+)-binding residues include Asp-343, Asp-345, and Gly-349. An intrachain disulfide couples Cys-351 to Cys-364. Gln-423 participates in a covalent cross-link: Isoglutamyl lysine isopeptide (Gln-Lys) (interchain with K-431). Ser-430 bears the Phosphoserine mark. Lys-431 participates in a covalent cross-link: Isoglutamyl lysine isopeptide (Lys-Gln) (interchain with Q-423).

In terms of assembly, heterohexamer; disulfide linked. Contains 2 sets of 3 non-identical chains (alpha, beta and gamma). The 2 heterotrimers are in head to head conformation with the N-termini in a small central domain. In terms of processing, conversion of fibrinogen to fibrin is triggered by thrombin, which cleaves fibrinopeptides A and B from alpha and beta chains, and thus exposes the N-terminal polymerization sites responsible for the formation of the soft clot. The soft clot is converted into the hard clot by factor XIIIA which catalyzes the epsilon-(gamma-glutamyl)lysine cross-linking between gamma chains (stronger) and between alpha chains (weaker) of different monomers.

Its subcellular location is the secreted. In terms of biological role, together with fibrinogen alpha (FGA) and fibrinogen beta (FGB), polymerizes to form an insoluble fibrin matrix. Fibrin has a major function in hemostasis as one of the primary components of blood clots. In addition, functions during the early stages of wound repair to stabilize the lesion and guide cell migration during re-epithelialization. Was originally thought to be essential for platelet aggregation, based on in vitro studies using anticoagulated blood. However, subsequent studies have shown that it is not absolutely required for thrombus formation in vivo. Enhances expression of SELP in activated platelets via an ITGB3-dependent pathway. Maternal fibrinogen is essential for successful pregnancy. Fibrin deposition is also associated with infection, where it protects against IFNG-mediated hemorrhage. May also facilitate the immune response via both innate and T-cell mediated pathways. This is Fibrinogen gamma chain (Fgg) from Mus musculus (Mouse).